The sequence spans 211 residues: Probable GTP-binding protein EngB (211 aa).

The EngB-type G domain occupies 21-197; it reads TAPEFAFLGR…WGEIHRVAAE (177 aa). GTP is bound by residues 29–36, 55–59, 80–83, 147–150, and 176–178; these read GRSNVGKS, GRTRA, DLPG, TKAD, and CSA. S36 and T57 together coordinate Mg(2+).

The protein belongs to the TRAFAC class TrmE-Era-EngA-EngB-Septin-like GTPase superfamily. EngB GTPase family. Mg(2+) serves as cofactor.

Its function is as follows. Necessary for normal cell division and for the maintenance of normal septation. This chain is Probable GTP-binding protein EngB, found in Acidobacterium capsulatum (strain ATCC 51196 / DSM 11244 / BCRC 80197 / JCM 7670 / NBRC 15755 / NCIMB 13165 / 161).